The sequence spans 96 residues: Prokineticin Bo8 (96 aa).

The first 19 residues, 1–19, serve as a signal peptide directing secretion; it reads MKCFAQIVVLLLVIAFSHG. 5 cysteine pairs are disulfide-bonded: Cys-26-Cys-38, Cys-32-Cys-50, Cys-37-Cys-78, Cys-60-Cys-86, and Cys-80-Cys-95.

Expressed by the skin glands.

Its subcellular location is the secreted. In terms of biological role, potent agonist for both PKR1/PROKR1 and PKR2/PROKR2, and inducer of a potent and long-lasting hyperalgesia. Also potentiates capsaicin-induced TRPV1 current, when tested on DRG neurons. At subnanomolar concentrations, this protein both induces potent chemotaxis of macrophages and stimulates LPS-induced production of the pro-inflammatory cytokines IL-1 and IL-12. In vivo, potently stimulates the contraction of the guinea-pig gastrointestinal (GI) smooth muscle (nanomolar concentration). This is Prokineticin Bo8 from Bombina orientalis (Oriental fire-bellied toad).